Consider the following 306-residue polypeptide: Aspartate carbamoyltransferase catalytic subunit (306 aa).

Carbamoyl phosphate-binding residues include Arg51 and Thr52. Lys79 provides a ligand contact to L-aspartate. Residues Arg101, His129, and Gln132 each contribute to the carbamoyl phosphate site. Residues Arg162 and Arg213 each contribute to the L-aspartate site. Residues Ala254 and Pro255 each contribute to the carbamoyl phosphate site.

This sequence belongs to the aspartate/ornithine carbamoyltransferase superfamily. ATCase family. As to quaternary structure, heterododecamer (2C3:3R2) of six catalytic PyrB chains organized as two trimers (C3), and six regulatory PyrI chains organized as three dimers (R2).

It catalyses the reaction carbamoyl phosphate + L-aspartate = N-carbamoyl-L-aspartate + phosphate + H(+). It participates in pyrimidine metabolism; UMP biosynthesis via de novo pathway; (S)-dihydroorotate from bicarbonate: step 2/3. Functionally, catalyzes the condensation of carbamoyl phosphate and aspartate to form carbamoyl aspartate and inorganic phosphate, the committed step in the de novo pyrimidine nucleotide biosynthesis pathway. This chain is Aspartate carbamoyltransferase catalytic subunit, found in Bacillus thuringiensis (strain Al Hakam).